The chain runs to 67 residues: MPKMKTKSSVKKRFKITATGKVMCGPGNKRHGLINRPQKMKRTNRGPQTMTDMDAKTIKQWAPYGLS.

The tract at residues 21–50 (KVMCGPGNKRHGLINRPQKMKRTNRGPQTM) is disordered. Residues 28–44 (NKRHGLINRPQKMKRTN) are compositionally biased toward basic residues.

This sequence belongs to the bacterial ribosomal protein bL35 family.

The polypeptide is Large ribosomal subunit protein bL35 (Gluconobacter oxydans (strain 621H) (Gluconobacter suboxydans)).